A 281-amino-acid chain; its full sequence is Very-long-chain (3R)-3-hydroxyacyl-CoA dehydratase 1 (281 aa).

Topologically, residues 1–68 (MGKGDWRQGR…RRLGLLATAW (68 aa)) are cytoplasmic. Residues 69–88 (LTFYNIAMTAGWLVLAIAMV) form a helical membrane-spanning segment. Residues 89–107 (RFYMEKGTHRGLYKSIQKT) are Lumenal-facing. The chain crosses the membrane as a helical span at residues 108-124 (LKFFQTFALLEVVHCLI). Over 125-134 (GIVPTSVLVT) the chain is Cytoplasmic. The helical transmembrane segment at 135-152 (GVQVSSRIFMVWLITHSI) threads the bilayer. The Lumenal segment spans residues 153–158 (KPIQNE). The helical transmembrane segment at 159–173 (ESVVLFLVSWTVTEI) threads the bilayer. Residues 174 to 196 (TRYSFYTFSLLDHLPHFIKWARY) are Cytoplasmic-facing. A helical membrane pass occupies residues 197–214 (NLFIILYPVGVAGELLTI). Residues Y203 and E210 contribute to the active site. The Lumenal portion of the chain corresponds to 215–244 (YAALPYVKKSGMFSVRLPNKYNVSFDYYYF). The N-linked (GlcNAc...) asparagine glycan is linked to N236. A helical membrane pass occupies residues 245–262 (LLITMASYIPLFPQLYFH). Residues 263-281 (MLRQRRKVLHGEVIAEKDD) are Cytoplasmic-facing.

Belongs to the very long-chain fatty acids dehydratase HACD family. May interact with enzymes of the ELO family (including ELOVL1); with those enzymes that mediate condensation, the first of the four steps of the reaction cycle responsible for fatty acids elongation, may be part of a larger fatty acids elongase complex. Interacts with TECR. Post-translationally, N-glycosylated. As to expression, expressed at high levels in heart, skeletal muscle and testis, weak expression in kidney and liver.

The protein resides in the endoplasmic reticulum membrane. The catalysed reaction is a very-long-chain (3R)-3-hydroxyacyl-CoA = a very-long-chain (2E)-enoyl-CoA + H2O. It catalyses the reaction (3R)-hydroxyhexadecanoyl-CoA = (2E)-hexadecenoyl-CoA + H2O. The enzyme catalyses (3R)-hydroxyoctadecanoyl-CoA = (2E)-octadecenoyl-CoA + H2O. It carries out the reaction (3R)-hydroxyeicosanoyl-CoA = (2E)-eicosenoyl-CoA + H2O. The catalysed reaction is (3R)-hydroxydocosanoyl-CoA = (2E)-docosenoyl-CoA + H2O. It catalyses the reaction (3R)-hydroxytetracosanoyl-CoA = (2E)-tetracosenoyl-CoA + H2O. The enzyme catalyses (3R)-hydroxyhexacosanoyl-CoA = (2E)-hexacosenoyl-CoA + H2O. The protein operates within lipid metabolism; fatty acid biosynthesis. The chain is Very-long-chain (3R)-3-hydroxyacyl-CoA dehydratase 1 from Mus musculus (Mouse).